Reading from the N-terminus, the 346-residue chain is Alkanal monooxygenase alpha chain (346 aa).

As to quaternary structure, heterodimer of an alpha and a beta chain.

The catalysed reaction is a long-chain fatty aldehyde + FMNH2 + O2 = a long-chain fatty acid + hnu + FMN + H2O + 2 H(+). In terms of biological role, light-emitting reaction in luminous bacteria. The sequence is that of Alkanal monooxygenase alpha chain (luxA) from Photobacterium phosphoreum.